Reading from the N-terminus, the 118-residue chain is Large ribosomal subunit protein bL20 (118 aa).

This sequence belongs to the bacterial ribosomal protein bL20 family.

Functionally, binds directly to 23S ribosomal RNA and is necessary for the in vitro assembly process of the 50S ribosomal subunit. It is not involved in the protein synthesizing functions of that subunit. The protein is Large ribosomal subunit protein bL20 of Trichodesmium erythraeum (strain IMS101).